The primary structure comprises 814 residues: Protein kintoun (814 aa).

Residues 234–246 (AANTARSPASPAP) are compositionally biased toward low complexity. Disordered stretches follow at residues 234–259 (AANT…EPRC) and 357–490 (ARQE…MGDP). Basic and acidic residues predominate over residues 388–404 (AAREESADGTGADHGEK). A phosphoserine mark is found at S444 and S618. A disordered region spans residues 654–686 (AGLQGKGKGVREGCPLSEAEAADQSATSPAASD). The span at 675-686 (ADQSATSPAASD) shows a compositional bias: low complexity.

It belongs to the PIH1 family. Kintoun subfamily. Interacts with DNAI2 and HSPA1A. Interacts with CFAP300. Interacts with DNAAF4. Interacts with DNAAF6/PIH1D3. As to expression, expressed in nearly all organs of adult, with higher expression in tissues known to have motile cilia and flagella, such as brain and testis.

The protein resides in the cytoplasm. It is found in the dynein axonemal particle. Its function is as follows. Required for cytoplasmic pre-assembly of axonemal dyneins, thereby playing a central role in motility in cilia and flagella. Involved in pre-assembly of dynein arm complexes in the cytoplasm before intraflagellar transport loads them for the ciliary compartment. This chain is Protein kintoun, found in Mus musculus (Mouse).